A 326-amino-acid polypeptide reads, in one-letter code: Protein TMED8 (326 aa).

Residues 1-99 (MSDRQAAEGP…EGQAPGEQAA (99 aa)) are disordered. Positions 50 to 65 (SSPLASASDPAAESSP) are enriched in low complexity. The 165-residue stretch at 160-324 (PPCVWTFAKV…NKTLYFHIYY (165 aa)) folds into the GOLD domain. Lys170 bears the N6-acetyllysine mark. The interval 234–268 (VQVSDSSEDEEEEEDEEEEIEEPVPVGDVERGSRS) is disordered. Over residues 239–255 (SSEDEEEEEDEEEEIEE) the composition is skewed to acidic residues.

This Mus musculus (Mouse) protein is Protein TMED8 (Tmed8).